The sequence spans 405 residues: 4-hydroxy-3-methylbut-2-en-1-yl diphosphate synthase (flavodoxin) (405 aa).

[4Fe-4S] cluster is bound by residues Cys-297, Cys-300, Cys-343, and Glu-350.

This sequence belongs to the IspG family. It depends on [4Fe-4S] cluster as a cofactor.

It catalyses the reaction (2E)-4-hydroxy-3-methylbut-2-enyl diphosphate + oxidized [flavodoxin] + H2O + 2 H(+) = 2-C-methyl-D-erythritol 2,4-cyclic diphosphate + reduced [flavodoxin]. Its pathway is isoprenoid biosynthesis; isopentenyl diphosphate biosynthesis via DXP pathway; isopentenyl diphosphate from 1-deoxy-D-xylulose 5-phosphate: step 5/6. Its function is as follows. Converts 2C-methyl-D-erythritol 2,4-cyclodiphosphate (ME-2,4cPP) into 1-hydroxy-2-methyl-2-(E)-butenyl 4-diphosphate. The protein is 4-hydroxy-3-methylbut-2-en-1-yl diphosphate synthase (flavodoxin) of Francisella tularensis subsp. mediasiatica (strain FSC147).